A 1037-amino-acid chain; its full sequence is Probable inorganic carbon transporter subunit DabA 2 (1037 aa).

Zn(2+) contacts are provided by Cys-460, Asp-462, His-719, and Cys-734.

It belongs to the inorganic carbon transporter (TC 9.A.2) DabA family. As to quaternary structure, forms a complex with DabB. The cofactor is Zn(2+).

It is found in the cell inner membrane. Functionally, part of an energy-coupled inorganic carbon pump. The sequence is that of Probable inorganic carbon transporter subunit DabA 2 from Nitrobacter winogradskyi (strain ATCC 25391 / DSM 10237 / CIP 104748 / NCIMB 11846 / Nb-255).